Here is a 78-residue protein sequence, read N- to C-terminus: Sec-independent protein translocase protein TatA (78 aa).

Residues 1-21 (MGGISIWQLLIIAVIVVLLFG) traverse the membrane as a helical segment. The segment covering 47–59 (ESEKKDADFEPKS) has biased composition (basic and acidic residues). The segment at 47-78 (ESEKKDADFEPKSLEQQNKQAATESKKDKEQA) is disordered. The segment covering 60 to 69 (LEQQNKQAAT) has biased composition (polar residues).

It belongs to the TatA/E family. The Tat system comprises two distinct complexes: a TatABC complex, containing multiple copies of TatA, TatB and TatC subunits, and a separate TatA complex, containing only TatA subunits. Substrates initially bind to the TatABC complex, which probably triggers association of the separate TatA complex to form the active translocon.

It is found in the cell inner membrane. In terms of biological role, part of the twin-arginine translocation (Tat) system that transports large folded proteins containing a characteristic twin-arginine motif in their signal peptide across membranes. TatA could form the protein-conducting channel of the Tat system. This Vibrio vulnificus (strain YJ016) protein is Sec-independent protein translocase protein TatA.